We begin with the raw amino-acid sequence, 567 residues long: Beta-galactoside-specific lectin 2 (567 aa).

The signal sequence occupies residues 1 to 33; the sequence is MNARLASSRAWVWCFLMVGLVCGATAKAESKIN. N-linked (GlcNAc...) asparagine glycosylation occurs at Asn145. Residue Glu198 is part of the active site. 2 disulfides stabilise this stretch: Cys280–Cys306 and Cys322–Cys341. Positions 288-301 are cleaved as a propeptide — connecting peptide; that stretch reads DVHNWPLVIRPVMV. The Ricin B-type lectin 1 domain maps to 309–439; it reads SEPTVRIVGR…DSLGQSWLAS (131 aa). Residue 324–326 coordinates D-galactose; sequence DVR. Asn362 carries an N-linked (GlcNAc...) asparagine glycan. Cys365 and Cys382 are oxidised to a cystine. N-linked (GlcNAc...) asparagine glycosylation is present at Asn440. The 124-residue stretch at 443–566 folds into the Ricin B-type lectin 2 domain; the sequence is APREVTIYGF…GNPNQMWLPV (124 aa). 2 disulfides stabilise this stretch: Cys456–Cys469 and Cys495–Cys512. 539–541 provides a ligand contact to D-galactose; it reads DVR.

The protein belongs to the ribosome-inactivating protein family. Type 2 RIP subfamily. In terms of assembly, disulfide-linked dimer of A and B chains.

The enzyme catalyses Endohydrolysis of the N-glycosidic bond at one specific adenosine on the 28S rRNA.. In terms of biological role, the A chain is responsible for inhibiting protein synthesis through the catalytic inactivation of 60S ribosomal subunits by removing adenine from position 4,324 of 28S rRNA. The B chain binds to cell receptors and probably facilitates the entry into the cell of the A chain; B chains are also responsible for cell agglutination (lectin activity). The chain is Beta-galactoside-specific lectin 2 from Viscum album (European mistletoe).